A 250-amino-acid chain; its full sequence is Ditrans,polycis-undecaprenyl-diphosphate synthase ((2E,6E)-farnesyl-diphosphate specific) (250 aa).

D20 is a catalytic residue. A Mg(2+)-binding site is contributed by D20. Residues 21-24 (GNGR), W25, R33, H37, and 65-67 (SSE) contribute to the substrate site. The Proton acceptor role is filled by N68. Substrate contacts are provided by residues W69, R71, R188, and 194–196 (RIS). Residue E207 participates in Mg(2+) binding.

Belongs to the UPP synthase family. As to quaternary structure, homodimer. The cofactor is Mg(2+).

The enzyme catalyses 8 isopentenyl diphosphate + (2E,6E)-farnesyl diphosphate = di-trans,octa-cis-undecaprenyl diphosphate + 8 diphosphate. In terms of biological role, catalyzes the sequential condensation of isopentenyl diphosphate (IPP) with (2E,6E)-farnesyl diphosphate (E,E-FPP) to yield (2Z,6Z,10Z,14Z,18Z,22Z,26Z,30Z,34E,38E)-undecaprenyl diphosphate (di-trans,octa-cis-UPP). UPP is the precursor of glycosyl carrier lipid in the biosynthesis of bacterial cell wall polysaccharide components such as peptidoglycan and lipopolysaccharide. The sequence is that of Ditrans,polycis-undecaprenyl-diphosphate synthase ((2E,6E)-farnesyl-diphosphate specific) from Vibrio cholerae serotype O1 (strain ATCC 39315 / El Tor Inaba N16961).